The sequence spans 496 residues: Probable malate:quinone oxidoreductase (496 aa).

This sequence belongs to the MQO family. It depends on FAD as a cofactor.

The catalysed reaction is (S)-malate + a quinone = a quinol + oxaloacetate. Its pathway is carbohydrate metabolism; tricarboxylic acid cycle; oxaloacetate from (S)-malate (quinone route): step 1/1. This Prochlorococcus marinus (strain NATL1A) protein is Probable malate:quinone oxidoreductase.